Reading from the N-terminus, the 472-residue chain is MENFKHLPEPFRIRVIEPVKRTTREYREQAMLKSGMNPFLLDSEDIFIDLLTDSGTGAVTQDMQAAMLRGDEAYSGSRSYYALAKAVKDIFGYEYTIPTHQGRGAEQIYIPVLIAKREREKGLDRSKMVVFSNYFFDTTQGHSQINGATVRNVYIKEAFDTTAKHPFKGNFDLEKLEKGIQEAGAHNVPYIVCTITCNSAGGQPVSIANLKGMYEIARKYDIPVIMDSARFAENAYFVQQREEAYKDWTIEQITYESYRYADGLAMSAKKDAMVPMGGILAFKDKSMEEVYHECRTLCVVQEGFPTYGGLEGGAMERLAVGLHDGMRQEWLAYRIAQIEYLVAGLEKIGVPCQQPGGHAAFVDAGKLLPHIPADQFPAQALSCELYKVAGIRAVEIGSFLLGRDPKTGKQLPCPAELLRLTIPRATYTQTHMDFIIEAFQKVKENAENIKGLTFTYEPKVLRHFTARLKEVE.

At K270 the chain carries N6-(pyridoxal phosphate)lysine.

Belongs to the beta-eliminating lyase family. As to quaternary structure, homotetramer. Requires pyridoxal 5'-phosphate as cofactor.

The catalysed reaction is L-tryptophan + H2O = indole + pyruvate + NH4(+). The protein operates within amino-acid degradation; L-tryptophan degradation via pyruvate pathway; indole and pyruvate from L-tryptophan: step 1/1. The protein is Tryptophanase of Haemophilus influenzae (strain 86-028NP).